The primary structure comprises 476 residues: Aspartyl/glutamyl-tRNA(Asn/Gln) amidotransferase subunit B (476 aa).

This sequence belongs to the GatB/GatE family. GatB subfamily. As to quaternary structure, heterotrimer of A, B and C subunits.

It carries out the reaction L-glutamyl-tRNA(Gln) + L-glutamine + ATP + H2O = L-glutaminyl-tRNA(Gln) + L-glutamate + ADP + phosphate + H(+). The catalysed reaction is L-aspartyl-tRNA(Asn) + L-glutamine + ATP + H2O = L-asparaginyl-tRNA(Asn) + L-glutamate + ADP + phosphate + 2 H(+). Functionally, allows the formation of correctly charged Asn-tRNA(Asn) or Gln-tRNA(Gln) through the transamidation of misacylated Asp-tRNA(Asn) or Glu-tRNA(Gln) in organisms which lack either or both of asparaginyl-tRNA or glutaminyl-tRNA synthetases. The reaction takes place in the presence of glutamine and ATP through an activated phospho-Asp-tRNA(Asn) or phospho-Glu-tRNA(Gln). This Geobacillus thermodenitrificans (strain NG80-2) protein is Aspartyl/glutamyl-tRNA(Asn/Gln) amidotransferase subunit B.